We begin with the raw amino-acid sequence, 789 residues long: Phenylalanine--tRNA ligase beta subunit (789 aa).

The tRNA-binding domain occupies 39 to 149 (ADGLEAFRIA…HEAPVGQSYV (111 aa)). Residues 399 to 471 (SAVPVISYDP…RIEGLDNVPS (73 aa)) enclose the B5 domain. Mg(2+) is bound by residues D449, D455, and D459. In terms of domain architecture, FDX-ACB spans 696 to 788 (SMLQPVFRDF…AAAKKGARLR (93 aa)).

It belongs to the phenylalanyl-tRNA synthetase beta subunit family. Type 1 subfamily. In terms of assembly, tetramer of two alpha and two beta subunits. Mg(2+) is required as a cofactor.

The protein localises to the cytoplasm. The enzyme catalyses tRNA(Phe) + L-phenylalanine + ATP = L-phenylalanyl-tRNA(Phe) + AMP + diphosphate + H(+). This chain is Phenylalanine--tRNA ligase beta subunit, found in Zymomonas mobilis subsp. mobilis (strain ATCC 31821 / ZM4 / CP4).